The chain runs to 257 residues: Protein IMPACT homolog (257 aa).

The 94-residue stretch at Ala-9 to Leu-102 folds into the RWD domain.

This sequence belongs to the IMPACT family. In terms of assembly, interacts with gcn-1; prevents the interaction of gcn-1 with gcn-2 and inhibits gcn-2 kinase activity. Interaction with rpl-39; this interaction occurs in a gcn-1-independent manner. Associates with ribosomes; this interaction occurs in a gcn-1-independent manner. Associates with actin; this interaction occurs in a gcn-1-independent manner.

Its subcellular location is the cytoplasm. Its function is as follows. Translational regulator that ensures constant high levels of translation under amino acid starvation. Plays a role as a negative regulator of the gcn-2 kinase activity; impairs gcn-1-mediated gcn-2 activation, and hence gcn-2-mediated eIF-2-alpha phosphorylation and subsequent down-regulation of protein synthesis in amino acid-starved cells. Plays a role in differentiation of neuronal cells by stimulating neurite outgrowth. The protein is Protein IMPACT homolog of Caenorhabditis elegans.